The sequence spans 476 residues: Cysteine--tRNA ligase (476 aa).

Cysteine 29 serves as a coordination point for Zn(2+). Positions 31 to 41 (PTVYDYPHLGH) match the 'HIGH' region motif. The Zn(2+) site is built by cysteine 209, histidine 234, and glutamate 238. The 'KMSKS' region motif lies at 266 to 270 (KMSKS). ATP is bound at residue lysine 269.

This sequence belongs to the class-I aminoacyl-tRNA synthetase family. It depends on Zn(2+) as a cofactor.

It localises to the cytoplasm. It carries out the reaction tRNA(Cys) + L-cysteine + ATP = L-cysteinyl-tRNA(Cys) + AMP + diphosphate. The chain is Cysteine--tRNA ligase (cysS) from Pyrococcus horikoshii (strain ATCC 700860 / DSM 12428 / JCM 9974 / NBRC 100139 / OT-3).